Here is a 384-residue protein sequence, read N- to C-terminus: 5-cytosine rRNA methyltransferase NSUN4 (384 aa).

The transit peptide at 1-25 (MAALTLRGVRELLKRVDLATVPRRH) directs the protein to the mitochondrion. S-adenosyl-L-methionine is bound by residues Gly185, Gly186, Lys187, and Asp204. Ser206 is modified (phosphoserine). S-adenosyl-L-methionine-binding residues include Arg209, Asp237, Gly238, and Asp255. Cys310 (nucleophile) is an active-site residue.

It belongs to the class I-like SAM-binding methyltransferase superfamily. RsmB/NOP family. In terms of assembly, heterodimer with MTERFD2/MTERF4; this interaction seems to be required for NSUN4 recruitment to the mitochondrial large ribosomal subunit.

Its subcellular location is the mitochondrion. It carries out the reaction a cytidine in rRNA + S-adenosyl-L-methionine = a 5-methylcytidine in rRNA + S-adenosyl-L-homocysteine + H(+). It catalyses the reaction a cytidine in mRNA + S-adenosyl-L-methionine = a 5-methylcytidine in mRNA + S-adenosyl-L-homocysteine + H(+). In terms of biological role, mitochondrial RNA cytosine C(5)-methyltransferase that methylates cytosine to 5-methylcytosine (m5C) in various RNAs, such as rRNAs, mRNAs and some long non-coding RNAs (lncRNAs). Involved in mitochondrial ribosome small subunit (SSU) maturation by catalyzing methylation of mitochondrial 12S rRNA; the function is independent of MTERFD2/MTERF4 and assembled mitochondrial ribosome large subunit (LSU). Targeted to LSU by MTERFD2/MTERF4 and probably is involved in a final step in ribosome biogenesis to ensure that SSU and LSU are assembled. In vitro can methylate 16S rRNA of the LSU; the methylation is enhanced by MTERFD/MTERF4. Also acts as a regulator of innate immunity by marking double-stranded mitochondrial RNAs(mt-dsRNAs) generated in response to stress: catalyzes m5C modification on mitochondrial RNAs, such as a mRNAs and lncRNAs, with a preference for the termini of light-strand lncRNAs, promoting their degradation and cytosolic release. Modified light-strand lncRNAs are then recognized by C1QBP reader and recruited to the mitochondrial degradosome complex, which promotes their degradation. The chain is 5-cytosine rRNA methyltransferase NSUN4 from Homo sapiens (Human).